Here is a 361-residue protein sequence, read N- to C-terminus: Chorismate synthase (361 aa).

2 residues coordinate NADP(+): R48 and R54. FMN contacts are provided by residues 125-127 (RSS), 238-239 (NA), G278, 293-297 (KPTSS), and R319.

This sequence belongs to the chorismate synthase family. As to quaternary structure, homotetramer. The cofactor is FMNH2.

The enzyme catalyses 5-O-(1-carboxyvinyl)-3-phosphoshikimate = chorismate + phosphate. It participates in metabolic intermediate biosynthesis; chorismate biosynthesis; chorismate from D-erythrose 4-phosphate and phosphoenolpyruvate: step 7/7. Functionally, catalyzes the anti-1,4-elimination of the C-3 phosphate and the C-6 proR hydrogen from 5-enolpyruvylshikimate-3-phosphate (EPSP) to yield chorismate, which is the branch point compound that serves as the starting substrate for the three terminal pathways of aromatic amino acid biosynthesis. This reaction introduces a second double bond into the aromatic ring system. In Escherichia coli O7:K1 (strain IAI39 / ExPEC), this protein is Chorismate synthase.